A 1097-amino-acid polypeptide reads, in one-letter code: DNA-directed RNA polymerase subunit beta (1097 aa).

The tract at residues 1073–1097 (DVNPRRSTPSRPTYESLGVADYDED) is disordered.

It belongs to the RNA polymerase beta chain family. As to quaternary structure, in cyanobacteria the RNAP catalytic core is composed of 2 alpha, 1 beta, 1 beta', 1 gamma and 1 omega subunit. When a sigma factor is associated with the core the holoenzyme is formed, which can initiate transcription.

The enzyme catalyses RNA(n) + a ribonucleoside 5'-triphosphate = RNA(n+1) + diphosphate. DNA-dependent RNA polymerase catalyzes the transcription of DNA into RNA using the four ribonucleoside triphosphates as substrates. The sequence is that of DNA-directed RNA polymerase subunit beta from Synechococcus sp. (strain CC9311).